Reading from the N-terminus, the 37-residue chain is Hemextin A (37 aa).

Heterotetramer composed of two A and two B chains; non-covalently linked. Does not exist as a complex in the crude venom. May contain several disulfide bonds. As to expression, expressed by the venom gland.

The protein resides in the secreted. Functionally, hemextin A (monomer): exhibits mild anticoagulant activity. It specifically inhibits the activation of FX (F10) by the TF-FVIIa complex (extrinsic tenase complex (ETC)) by non-competitively inhibiting the enzymatic activity of FVIIa. Hemextin AB complex: specifically inhibits the activation of FX (F10) by the TF-FVIIa complex (extrinsic tenase complex (ETC)) (IC(50)= 100 nM, Ki=25 nM) by non-competitively inhibiting the enzymatic activity of FVIIa. The sequence is that of Hemextin A from Hemachatus haemachatus (Rinkhals).